The primary structure comprises 561 residues: DNA ligase (561 aa).

Position 253 (glutamate 253) interacts with ATP. Lysine 255 acts as the N6-AMP-lysine intermediate in catalysis. Arginine 260, arginine 275, glutamate 304, phenylalanine 344, arginine 421, and lysine 427 together coordinate ATP.

It belongs to the ATP-dependent DNA ligase family. Requires Mg(2+) as cofactor.

The catalysed reaction is ATP + (deoxyribonucleotide)n-3'-hydroxyl + 5'-phospho-(deoxyribonucleotide)m = (deoxyribonucleotide)n+m + AMP + diphosphate.. Its function is as follows. DNA ligase that seals nicks in double-stranded DNA during DNA replication, DNA recombination and DNA repair. The protein is DNA ligase of Halobacterium salinarum (strain ATCC 29341 / DSM 671 / R1).